Reading from the N-terminus, the 301-residue chain is Protoheme IX farnesyltransferase (301 aa).

9 helical membrane passes run Phe-20–Leu-42, Val-55–Phe-75, Ala-105–Trp-125, Gln-126–Ala-146, Leu-150–Val-172, Phe-176–Ile-198, Met-227–Val-247, Val-249–Met-269, and Phe-280–Phe-300.

It belongs to the UbiA prenyltransferase family. Protoheme IX farnesyltransferase subfamily. Interacts with CtaA.

It localises to the cell membrane. The catalysed reaction is heme b + (2E,6E)-farnesyl diphosphate + H2O = Fe(II)-heme o + diphosphate. Its pathway is porphyrin-containing compound metabolism; heme O biosynthesis; heme O from protoheme: step 1/1. Converts heme B (protoheme IX) to heme O by substitution of the vinyl group on carbon 2 of heme B porphyrin ring with a hydroxyethyl farnesyl side group. The chain is Protoheme IX farnesyltransferase from Listeria monocytogenes serotype 4b (strain CLIP80459).